The following is a 1056-amino-acid chain: PAX-interacting protein 1 (1056 aa).

BRCT domains lie at 8–93 and 94–183; these read VPEE…GFSP and ESCQ…FYHP. Residues 94–183 are interaction with PAGR1; the sequence is ESCQIFFGLT…RRKDEAFYHP (90 aa). Positions 188–205 are enriched in acidic residues; it reads YEEEEEEEEEGDNEEQDS. Disordered regions lie at residues 188 to 276, 393 to 412, and 419 to 486; these read YEEE…QRRL, THVL…HPAL, and MQLQ…FQQQ. Residues 214–223 are compositionally biased toward low complexity; the sequence is SSVASSAVAS. Residues S223 and S230 each carry the phosphoserine modification. Composition is skewed to low complexity over residues 396-412, 419-435, and 445-486; these read LQQH…HPAL, MQLQ…QQQP, and QFPQ…FQQQ. The tract at residues 577–1056 is interaction with TP53BP1; the sequence is QLFGHDPAVE…TLDYESYKFN (480 aa). BRCT domains follow at residues 588-681, 688-776, 853-934, and 955-989; these read PEES…RALH, PGGK…VQYS, TPLV…NYIL, and HVSP…GGKV. The Nuclear localization signal signature appears at 655–672; that stretch reads RKRCVTAHWLNTVLKKKK.

As to quaternary structure, interacts with the C-terminal transactivation domain of PAX2. Forms a constitutive complex with PAGR1 independently of the MLL2/MLL3 complex. Interacts with TP53BP1 (when phosphorylated at the N-terminus by ATM). Interacts with HLTF. Component of the KMT2 family MLL2/MLL3 complex (also named ASCOM complex), at least composed of the HMTs KMT2D and/or KMT2C, the common subunits ASH2L, RBBP5, WDR5 and DPY30, and the complex type-specific subunits PAXIP1/PTIP, PAGR1, NCOA6 and KDM6A; required for the association of PAGR1 with the MLL2/MLL3 complex. Interacts with NUPR1; this interaction prevents PAXIP1 inhibition of PAX2 transcription factor activity. In terms of tissue distribution, expression detected in all tissues examined, including brain stem, cerebellum, cortex, heart, spleen, kidney, liver, thymus and lung.

It is found in the nucleus matrix. The protein localises to the chromosome. Involved in DNA damage response and in transcriptional regulation through histone methyltransferase (HMT) complexes such as the MLL2/MLL3 complex. Plays a role in early development. In DNA damage response is required for cell survival after ionizing radiation. In vitro shown to be involved in the homologous recombination mechanism for the repair of double-strand breaks (DSBs). Its localization to DNA damage foci requires Rnf8 and Ube2n. Recruits Tp53bp1 to DNA damage foci and, at least in particular repair processes, effective DNA damage response appears to require the association with Tp53bp1 phosphorylated by Atm. Together with Tp53bp1 regulates Atm association. Proposed to recruit Pagr1 to sites of DNA damage and the Pagr1:Paxip1 complex is required for cell survival in response to DNA damage independently of the MLL2/MLL3 complex. However, this function has been questioned. Promotes ubiquitination of PCNA following UV irradiation and may regulate recruitment of polymerase eta and Rad51 to chromatin after DNA damage. Proposed to be involved in transcriptional regulation by linking MLL-containing histone methyltransferase (HMT) complexes to gene promoters by interacting with promoter-bound transcription factors such as Pax2. Associates with gene promoters that are known to be regulated by Kmt2d/Mll2. During immunoglobulin class switching in activated B-cells is involved in trimethylation of histone H3 at 'Lys-4' and in transcription initiation of downstream switch regions at the immunoglobulin heavy-chain (Igh) locus; this function appears to involve the recruitment of MLL-containing HMT complexes. Conflictingly, its function in transcriptional regulation during immunoglobulin class switching is reported to be independent of the MLL2/MLL3 complex. This Mus musculus (Mouse) protein is PAX-interacting protein 1 (Paxip1).